The chain runs to 308 residues: Mannan endo-1,4-beta-mannosidase (308 aa).

Catalysis depends on Glu-125, which acts as the Proton donor. Glu-220 serves as the catalytic Nucleophile. Residues 284 to 308 (DGLQETSKPSTVFTDDNGGHPEPPT) are disordered. Residues 287–297 (QETSKPSTVFT) are compositionally biased toward polar residues.

Belongs to the glycosyl hydrolase 5 (cellulase A) family.

The catalysed reaction is Random hydrolysis of (1-&gt;4)-beta-D-mannosidic linkages in mannans, galactomannans and glucomannans.. Its function is as follows. Catalyzes the endo hydrolysis of beta-1,4-linked mannan, galactomannan and glucomannan. It is able to hydrolyze mannosidic linkages that are flanked by mannose or glucose. This chain is Mannan endo-1,4-beta-mannosidase, found in Salipaludibacillus agaradhaerens (Bacillus agaradhaerens).